The primary structure comprises 596 residues: Uptake hydrogenase large subunit (596 aa).

The Ni(2+) site is built by cysteine 75, cysteine 78, cysteine 575, and cysteine 578.

Belongs to the [NiFe]/[NiFeSe] hydrogenase large subunit family. As to quaternary structure, heterodimer of a large and a small subunit. Ni(2+) is required as a cofactor.

The protein localises to the cell membrane. The catalysed reaction is H2 + A = AH2. This enzyme recycles the H(2) produced by nitrogenase to increase the production of ATP and to protect nitrogenase against inhibition or damage by O(2) under carbon- or phosphate-limited conditions. This is Uptake hydrogenase large subunit (hupB) from Rhizobium leguminosarum bv. viciae.